Reading from the N-terminus, the 560-residue chain is Dihydroxy-acid dehydratase (560 aa).

Asp-78 contributes to the Mg(2+) binding site. Cys-119 is a binding site for [2Fe-2S] cluster. Mg(2+) contacts are provided by Asp-120 and Lys-121. Lys-121 carries the N6-carboxylysine modification. Cys-192 is a [2Fe-2S] cluster binding site. Glu-446 lines the Mg(2+) pocket. Residue Ser-472 is the Proton acceptor of the active site.

It belongs to the IlvD/Edd family. As to quaternary structure, homodimer. It depends on [2Fe-2S] cluster as a cofactor. Mg(2+) serves as cofactor.

It catalyses the reaction (2R)-2,3-dihydroxy-3-methylbutanoate = 3-methyl-2-oxobutanoate + H2O. The catalysed reaction is (2R,3R)-2,3-dihydroxy-3-methylpentanoate = (S)-3-methyl-2-oxopentanoate + H2O. It functions in the pathway amino-acid biosynthesis; L-isoleucine biosynthesis; L-isoleucine from 2-oxobutanoate: step 3/4. The protein operates within amino-acid biosynthesis; L-valine biosynthesis; L-valine from pyruvate: step 3/4. Functions in the biosynthesis of branched-chain amino acids. Catalyzes the dehydration of (2R,3R)-2,3-dihydroxy-3-methylpentanoate (2,3-dihydroxy-3-methylvalerate) into 2-oxo-3-methylpentanoate (2-oxo-3-methylvalerate) and of (2R)-2,3-dihydroxy-3-methylbutanoate (2,3-dihydroxyisovalerate) into 2-oxo-3-methylbutanoate (2-oxoisovalerate), the penultimate precursor to L-isoleucine and L-valine, respectively. In Anaeromyxobacter sp. (strain K), this protein is Dihydroxy-acid dehydratase.